Here is a 340-residue protein sequence, read N- to C-terminus: MNKTAEELLDSLKCASDGLASALTSVTLKFNCAFISTIVLISYCFSWLAIQALWNNNIFSNSTRLILIVCLLNSVVHQTTVMETRITQIYRSIVFASEPCEILFRSSECEIELYFYYLTNYFSTYSVFSLTFDRLISHYKSKYYHMHQYFIAISLLVLQFLLAILSFYIAYHGVPLAGYVPMCNYYPKMAVHHITINDVRTVVMVSCIIVTGFAYYLSVKSEKQIQKCSYSPGERYSAYENVTTSQSVCILIVLQFSCTMISSFGVNLLLMMQEAVSEETFTKVGAFLPGVAYANLCLPLAIYFKTKLTIQNRKLRIAVMISMYGDVGEHIARLKKSWEY.

Transmembrane regions (helical) follow at residues 34–54, 114–136, 150–170, 199–219, 250–270, and 284–304; these read FIST…QALW, YFYY…DRLI, FIAI…FYIA, VRTV…YLSV, ILIV…NLLL, and VGAF…AIYF.

It belongs to the nematode receptor-like protein sra family.

The protein resides in the membrane. This chain is Serpentine receptor class alpha-23 (sra-23), found in Caenorhabditis elegans.